A 221-amino-acid polypeptide reads, in one-letter code: Endonuclease V (221 aa).

Asp38 and Asp104 together coordinate Mg(2+).

This sequence belongs to the endonuclease V family. Requires Mg(2+) as cofactor.

The protein localises to the cytoplasm. The enzyme catalyses Endonucleolytic cleavage at apurinic or apyrimidinic sites to products with a 5'-phosphate.. Functionally, DNA repair enzyme involved in the repair of deaminated bases. Selectively cleaves double-stranded DNA at the second phosphodiester bond 3' to a deoxyinosine leaving behind the intact lesion on the nicked DNA. Recognizes only deoxyinosine. The chain is Endonuclease V from Archaeoglobus fulgidus (strain ATCC 49558 / DSM 4304 / JCM 9628 / NBRC 100126 / VC-16).